A 354-amino-acid chain; its full sequence is Alkanal monooxygenase alpha chain (354 aa).

It belongs to the bacterial luciferase oxidoreductase family. In terms of assembly, heterodimer of an alpha and a beta chain.

The enzyme catalyses a long-chain fatty aldehyde + FMNH2 + O2 = a long-chain fatty acid + hnu + FMN + H2O + 2 H(+). Light-emitting reaction in luminous bacteria. This is Alkanal monooxygenase alpha chain (luxA) from Aliivibrio fischeri (Vibrio fischeri).